Consider the following 432-residue polypeptide: Keratin, type I cytoskeletal 17 (432 aa).

Positions 1–24 (MTTSIRQFTSSSSIKGSSGLGGGS) are disordered. Positions 1-83 (MTTSIRQFTS…GGVDGLLAGG (83 aa)) are head. Phosphoserine occurs at positions 12 and 13. Residue Lys15 forms a Glycyl lysine isopeptide (Lys-Gly) (interchain with G-Cter in SUMO1); alternate linkage. A Glycyl lysine isopeptide (Lys-Gly) (interchain with G-Cter in SUMO2); alternate cross-link involves residue Lys15. A phosphoserine mark is found at Ser25, Ser32, and Ser39. At Ser44 the chain carries Phosphoserine; by RPS6KA1. Residues 84-120 (EKATMQNLNDRLASYLDKVRALEEANTELEVKIRDWY) are coil 1A. The IF rod domain occupies 84-395 (EKATMQNLND…RLLEGEDAHL (312 aa)). The peptide epitope S1; induces T-cell and keratinocyte proliferation and IFN-gamma production stretch occupies residues 102–116 (VRALEEANTELEVKI). Thr110 is subject to Phosphothreonine. Residues 121–138 (QRQAPGPARDYSQYYRTI) are linker 1. The interval 139–230 (EELQNKILTA…NHEEEMNALR (92 aa)) is coil 1B. The peptide epitope S2; induces T-cell proliferation and IFN-gamma production stretch occupies residues 153–167 (ANILLQIDNARLAAD). The segment at 231–250 (GQVGGEINVEMDAAPGVDLS) is linker 12. Positions 251 to 392 (RILNEMRDQY…TYRRLLEGED (142 aa)) are coil 2. A Glycyl lysine isopeptide (Lys-Gly) (interchain with G-Cter in SUMO2) cross-link involves residue Lys278. Phosphothreonine is present on Thr279. Ser323 carries the post-translational modification Phosphoserine. A peptide epitope S4; induces T-cell and keratinocyte proliferation and IFN-gamma production region spans residues 332–346 (ENRYCVQLSQIQGLI). The tail stretch occupies residues 393–432 (AHLTQYKKEPVTTRQVRTIVEEVQDGKVISSREQVHQTTR). Residues Lys399, Lys400, and Lys419 each participate in a glycyl lysine isopeptide (Lys-Gly) (interchain with G-Cter in SUMO1); alternate cross-link. Glycyl lysine isopeptide (Lys-Gly) (interchain with G-Cter in SUMO2); alternate cross-links involve residues Lys399, Lys400, and Lys419.

The protein belongs to the intermediate filament family. As to quaternary structure, heterodimer of a type I and a type II keratin. KRT17 associates with KRT6 isomers (KRT6A or KRT6B). Interacts with TRADD and SFN. In terms of processing, phosphorylation at Ser-44 occurs in a growth- and stress-dependent fashion in skin keratinocytes, it has no effect on filament organization. In terms of tissue distribution, expressed in the outer root sheath and medulla region of hair follicle specifically from eyebrow and beard, digital pulp, nail matrix and nail bed epithelium, mucosal stratified squamous epithelia and in basal cells of oral epithelium, palmoplantar epidermis and sweat and mammary glands. Also expressed in myoepithelium of prostate, basal layer of urinary bladder, cambial cells of sebaceous gland and in exocervix (at protein level).

The protein localises to the cytoplasm. Its function is as follows. Type I keratin involved in the formation and maintenance of various skin appendages, specifically in determining shape and orientation of hair. Required for the correct growth of hair follicles, in particular for the persistence of the anagen (growth) state. Modulates the function of TNF-alpha in the specific context of hair cycling. Regulates protein synthesis and epithelial cell growth through binding to the adapter protein SFN and by stimulating Akt/mTOR pathway. Involved in tissue repair. May be a marker of basal cell differentiation in complex epithelia and therefore indicative of a certain type of epithelial 'stem cells'. Acts as a promoter of epithelial proliferation by acting a regulator of immune response in skin: promotes Th1/Th17-dominated immune environment contributing to the development of basaloid skin tumors. May act as an autoantigen in the immunopathogenesis of psoriasis, with certain peptide regions being a major target for autoreactive T-cells and hence causing their proliferation. The sequence is that of Keratin, type I cytoskeletal 17 (KRT17) from Homo sapiens (Human).